The primary structure comprises 31 residues: Cytochrome b6-f complex subunit 6 (31 aa).

A helical transmembrane segment spans residues 4–24; sequence ITSYFGFLLAALTITSALFIG.

This sequence belongs to the PetL family. As to quaternary structure, the 4 large subunits of the cytochrome b6-f complex are cytochrome b6, subunit IV (17 kDa polypeptide, PetD), cytochrome f and the Rieske protein, while the 4 small subunits are PetG, PetL, PetM and PetN. The complex functions as a dimer.

It localises to the plastid. It is found in the chloroplast thylakoid membrane. Component of the cytochrome b6-f complex, which mediates electron transfer between photosystem II (PSII) and photosystem I (PSI), cyclic electron flow around PSI, and state transitions. PetL is important for photoautotrophic growth as well as for electron transfer efficiency and stability of the cytochrome b6-f complex. This is Cytochrome b6-f complex subunit 6 from Solanum tuberosum (Potato).